The sequence spans 31 residues: MSDIN-like toxin proprotein 8 (31 aa).

Positions 1–10 (MSDINTARLP) are excised as a propeptide. A cross-link (cyclopeptide (Cys-Pro)) is located at residues 11–18 (CIGFLGIP). A propeptide spanning residues 19–31 (SVGDDIEMVLRHG) is cleaved from the precursor.

Belongs to the MSDIN fungal toxin family. Post-translationally, processed by the macrocyclase-peptidase enzyme POPB to yield a toxic cyclic octapeptide. POPB first removes 10 residues from the N-terminus. Conformational trapping of the remaining peptide forces the enzyme to release this intermediate rather than proceed to macrocyclization. The enzyme rebinds the remaining peptide in a different conformation and catalyzes macrocyclization of the N-terminal 8 residues.

In terms of biological role, probable toxin that belongs to the MSDIN-like toxin family responsible for a large number of food poisoning cases and deaths. This chain is MSDIN-like toxin proprotein 8, found in Amanita bisporigera (Destroying angel).